Reading from the N-terminus, the 443-residue chain is 23S rRNA (uracil(1939)-C(5))-methyltransferase RlmD (443 aa).

The TRAM domain maps to Gln-4–Glu-66. Cys-79, Cys-85, Cys-88, and Cys-167 together coordinate [4Fe-4S] cluster. Residues Gln-275, Phe-304, Asn-309, Glu-325, Asp-352, and Asp-373 each coordinate S-adenosyl-L-methionine. Residue Cys-399 is the Nucleophile of the active site.

It belongs to the class I-like SAM-binding methyltransferase superfamily. RNA M5U methyltransferase family. RlmD subfamily.

It carries out the reaction uridine(1939) in 23S rRNA + S-adenosyl-L-methionine = 5-methyluridine(1939) in 23S rRNA + S-adenosyl-L-homocysteine + H(+). In terms of biological role, catalyzes the formation of 5-methyl-uridine at position 1939 (m5U1939) in 23S rRNA. This is 23S rRNA (uracil(1939)-C(5))-methyltransferase RlmD from Xylella fastidiosa (strain 9a5c).